The following is a 122-amino-acid chain: Large ribosomal subunit protein uL14 (122 aa).

Belongs to the universal ribosomal protein uL14 family. As to quaternary structure, part of the 50S ribosomal subunit. Forms a cluster with proteins L3 and L19. In the 70S ribosome, L14 and L19 interact and together make contacts with the 16S rRNA in bridges B5 and B8.

Its function is as follows. Binds to 23S rRNA. Forms part of two intersubunit bridges in the 70S ribosome. The protein is Large ribosomal subunit protein uL14 of Corynebacterium glutamicum (strain R).